Reading from the N-terminus, the 345-residue chain is Phosphoribosylformylglycinamidine cyclo-ligase (345 aa).

This sequence belongs to the AIR synthase family.

It localises to the cytoplasm. The enzyme catalyses 2-formamido-N(1)-(5-O-phospho-beta-D-ribosyl)acetamidine + ATP = 5-amino-1-(5-phospho-beta-D-ribosyl)imidazole + ADP + phosphate + H(+). It participates in purine metabolism; IMP biosynthesis via de novo pathway; 5-amino-1-(5-phospho-D-ribosyl)imidazole from N(2)-formyl-N(1)-(5-phospho-D-ribosyl)glycinamide: step 2/2. This is Phosphoribosylformylglycinamidine cyclo-ligase from Cronobacter sakazakii (strain ATCC BAA-894) (Enterobacter sakazakii).